A 914-amino-acid polypeptide reads, in one-letter code: Valine--tRNA ligase (914 aa).

The 'HIGH' region signature appears at 47 to 57 (PYPTGELHMGH). Residues 552–556 (KMSKS) carry the 'KMSKS' region motif. Position 555 (Lys-555) interacts with ATP.

It belongs to the class-I aminoacyl-tRNA synthetase family. ValS type 2 subfamily.

It is found in the cytoplasm. The enzyme catalyses tRNA(Val) + L-valine + ATP = L-valyl-tRNA(Val) + AMP + diphosphate. In terms of biological role, catalyzes the attachment of valine to tRNA(Val). As ValRS can inadvertently accommodate and process structurally similar amino acids such as threonine, to avoid such errors, it has a 'posttransfer' editing activity that hydrolyzes mischarged Thr-tRNA(Val) in a tRNA-dependent manner. This Methanopyrus kandleri (strain AV19 / DSM 6324 / JCM 9639 / NBRC 100938) protein is Valine--tRNA ligase.